The following is a 393-amino-acid chain: MGGVDFEGFRKLQRADGFASILAIGTANPPNAVDQSTYPDFYFRITGNEHNTELKDKFKRICERSAIKQRYMYLTEEILKKNPDVCAFVEVPSLDARQAMLAMEVPRLAKEAAEKAIQEWGQSKSGITHLIFCSTTTPDLPGADFEVAKLLGLHPSVKRVGVFQHGCFAGGTVLRMAKDLAENNRGARVLVICSETTAVTFRGPSETHLDSLVGQALFGDGASALIVGADPIPQVEKACFEIVWTAQTVVPNSEGAIGGKVREVGLTFQLKGAVPDLISANIENCMVEAFSQFKISDWNKLFWVVHPGGRAILDRVEAKLNLDPTKLIPTRHVMSEYGNMSSACVHFILDQTRKASLQNGCSTTGEGLEMGVLFGFGPGLTIETVVLKSVPIQ.

A substrate-binding site is contributed by 57-60 (KFKR). C167 is a catalytic residue. Substrate is bound by residues L270 and 308-310 (GGR).

This sequence belongs to the thiolase-like superfamily. Chalcone/stilbene synthases family. In terms of assembly, homodimer.

It localises to the cytoplasm. It carries out the reaction (E)-cinnamoyl-CoA + 3 malonyl-CoA + 3 H(+) = (E)-pinosylvin + 4 CO2 + 4 CoA. It catalyses the reaction 3-phenylpropanoyl-CoA + 3 malonyl-CoA + 3 H(+) = dihydropinosylvin + 4 CO2 + 4 CoA. The protein operates within phytoalexin biosynthesis; hydropinosylvin biosynthesis. Its function is as follows. Catalyzes the production of pinosylvin from cinnamoyl-CoA and malonyl-CoA, and dihydropinosylvin from dihydrocinnamoyl-CoA. The chain is Pinosylvin synthase from Pinus sylvestris (Scotch pine).